A 298-amino-acid chain; its full sequence is MPVISLAQMLESGVHFGHQARRWNPKMDPYIFTERNGVHIIDLVQTAQLMDEAYHYVRSASESGKKFLFVGTKRQAAGIIAQEAARCGGYYVNQRWLGGMLTNWTTIKTRIERLKDLERRYESGIFDLLPKQEASMLRRELDKLQKYLGGLKQMHKIPDVVVIIDIRREYNAVQECQKLGLPIVSLLDTNCDPDWVDIPIPANDDAIRSIKLIIGKLADAIYEGRHGQVSAETFEGDDIPSAIDFEDETPEPVAEVADAEVAAAEPVAEAAPTAEAAPEEAPAEDAAPTAEAEEPAAE.

The interval 232–298 (ETFEGDDIPS…TAEAEEPAAE (67 aa)) is disordered. A compositionally biased stretch (acidic residues) spans 234–250 (FEGDDIPSAIDFEDETP). Residues 251–276 (EPVAEVADAEVAAAEPVAEAAPTAEA) show a composition bias toward low complexity.

It belongs to the universal ribosomal protein uS2 family.

In Acaryochloris marina (strain MBIC 11017), this protein is Small ribosomal subunit protein uS2.